The chain runs to 323 residues: UPF0065 protein BP0148 (323 aa).

The N-terminal stretch at 1-24 is a signal peptide; the sequence is MKPFSLLRRIATIALLMAASSAHA.

Belongs to the UPF0065 (bug) family.

It is found in the periplasm. This chain is UPF0065 protein BP0148, found in Bordetella pertussis (strain Tohama I / ATCC BAA-589 / NCTC 13251).